The sequence spans 601 residues: uncharacterized protein (601 aa).

The next 3 membrane-spanning stretches (helical) occupy residues 74 to 94 (IFFF…VFSI), 104 to 124 (VSFL…PNDG), and 531 to 551 (LVLL…NYYY).

It localises to the endoplasmic reticulum membrane. This is an uncharacterized protein from Schizosaccharomyces pombe (strain 972 / ATCC 24843) (Fission yeast).